Reading from the N-terminus, the 110-residue chain is UPF0339 protein PA0329 (110 aa).

Repeat copies occupy residues 10–58 (AKDG…AFEV) and 61–109 (ANNG…LSDE). A disordered region spans residues 91–110 (EAGVQSVKRATPEAGLSDES).

It belongs to the UPF0339 family. Duplicated subfamily.

In Pseudomonas aeruginosa (strain ATCC 15692 / DSM 22644 / CIP 104116 / JCM 14847 / LMG 12228 / 1C / PRS 101 / PAO1), this protein is UPF0339 protein PA0329.